Here is a 535-residue protein sequence, read N- to C-terminus: Sterol 26-hydroxylase, mitochondrial (535 aa).

The transit peptide at Met-1 to Thr-36 directs the protein to the mitochondrion. Lys-286 carries the N6-acetyllysine modification. A sterol-binding region spans residues Pro-387–Pro-401. Cys-480 is a binding site for heme. Lys-524 carries the N6-acetyllysine modification.

Belongs to the cytochrome P450 family. In terms of assembly, interacts with HSP70; this interaction is required for initial targeting to mitochondria. Heme serves as cofactor. In terms of tissue distribution, expressed in all tissues tested. Highest expression in liver and duodenum, followed by adrenal gland and lung. Low expression in kidney and spleen.

It is found in the mitochondrion inner membrane. The enzyme catalyses 5beta-cholestane-3alpha,7alpha,12alpha-triol + 6 reduced [adrenodoxin] + 3 O2 + 5 H(+) = (25R)-3alpha,7alpha,12alpha-trihydroxy-5beta-cholestan-26-oate + 6 oxidized [adrenodoxin] + 4 H2O. It carries out the reaction cholestanol + 2 reduced [adrenodoxin] + O2 + 2 H(+) = (25R)-26-hydroxycholestanol + 2 oxidized [adrenodoxin] + H2O. The catalysed reaction is (25R)-3beta-hydroxycholest-5-en-7-one-26-al + 2 reduced [adrenodoxin] + O2 + H(+) = (25R)-3beta-hydroxycholest-5-en-7-one-26-oate + 2 oxidized [adrenodoxin] + H2O. It catalyses the reaction (25R)-3beta,26-dihydroxycholest-5-en-7-one + 2 reduced [adrenodoxin] + O2 + 2 H(+) = (25R)-3beta-hydroxycholest-5-en-7-one-26-al + 2 oxidized [adrenodoxin] + 2 H2O. The enzyme catalyses 7-oxocholesterol + 2 reduced [adrenodoxin] + O2 + 2 H(+) = (25R)-3beta,26-dihydroxycholest-5-en-7-one + 2 oxidized [adrenodoxin] + H2O. It carries out the reaction calciol + 2 reduced [adrenodoxin] + O2 + 2 H(+) = calcidiol + 2 oxidized [adrenodoxin] + H2O. The catalysed reaction is (25R)-5beta-cholestane-3alpha,7alpha,12alpha,26-tetrol + 2 reduced [adrenodoxin] + O2 + 2 H(+) = (25R)-3alpha,7alpha,12alpha-trihydroxy-5beta-cholestan-26-al + 2 oxidized [adrenodoxin] + 2 H2O. It catalyses the reaction 2 reduced [adrenodoxin] + cholesterol + O2 + 2 H(+) = (25R)-cholest-5-ene-3beta,26-diol + 2 oxidized [adrenodoxin] + H2O. The enzyme catalyses (25R)-3beta,4beta-dihydroxycholest-5-en-26-al + 2 reduced [adrenodoxin] + O2 + H(+) = (25R)-3beta,4beta-dihydroxycholest-5-en-26-oate + 2 oxidized [adrenodoxin] + H2O. It carries out the reaction (25R)-4beta,26-dihydroxycholesterol + 2 reduced [adrenodoxin] + O2 + 2 H(+) = (25R)-3beta,4beta-dihydroxycholest-5-en-26-al + 2 oxidized [adrenodoxin] + 2 H2O. The catalysed reaction is 4beta-hydroxycholesterol + 2 reduced [adrenodoxin] + O2 + 2 H(+) = (25R)-4beta,26-dihydroxycholesterol + 2 oxidized [adrenodoxin] + H2O. It catalyses the reaction (25R)-3beta-hydroxy-5-cholesten-26-al + 2 reduced [adrenodoxin] + O2 + H(+) = (25R)-3beta-hydroxy-5-cholestenoate + 2 oxidized [adrenodoxin] + H2O. The enzyme catalyses (25R)-cholest-5-ene-3beta,26-diol + 2 reduced [adrenodoxin] + O2 + 2 H(+) = (25R)-3beta-hydroxy-5-cholesten-26-al + 2 oxidized [adrenodoxin] + 2 H2O. It carries out the reaction (25R)-3alpha,7alpha,12alpha-trihydroxy-5beta-cholestan-26-al + 2 reduced [adrenodoxin] + O2 + H(+) = (25R)-3alpha,7alpha,12alpha-trihydroxy-5beta-cholestan-26-oate + 2 oxidized [adrenodoxin] + H2O. The catalysed reaction is 5beta-cholestane-3alpha,7alpha,12alpha-triol + 2 reduced [adrenodoxin] + O2 + 2 H(+) = (25R)-5beta-cholestane-3alpha,7alpha,12alpha,26-tetrol + 2 oxidized [adrenodoxin] + H2O. Its pathway is hormone biosynthesis; cholecalciferol biosynthesis. It functions in the pathway steroid metabolism; cholesterol degradation. It participates in lipid metabolism; bile acid biosynthesis. In terms of biological role, cytochrome P450 monooxygenase that catalyzes regio- and stereospecific hydroxylation of cholesterol and its derivatives. Hydroxylates (with R stereochemistry) the terminal methyl group of cholesterol side-chain in a three step reaction to yield at first a C26 alcohol, then a C26 aldehyde and finally a C26 acid. Regulates cholesterol homeostasis by catalyzing the conversion of excess cholesterol to bile acids via both the 'neutral' (classic) and the 'acid' (alternative) pathways. May also regulate cholesterol homeostasis via generation of active oxysterols, which act as ligands for NR1H2 and NR1H3 nuclear receptors, modulating the transcription of genes involved in lipid metabolism. Plays a role in cholestanol metabolism in the cerebellum. Similarly to cholesterol, hydroxylates cholestanol and may facilitate sterol diffusion through the blood-brain barrier to the systemic circulation for further degradation. Also hydroxylates retinal 7-ketocholesterol, a noxious oxysterol with pro-inflammatory and pro-apoptotic effects, and may play a role in its elimination from the retinal pigment epithelium. May play a redundant role in vitamin D biosynthesis. Catalyzes 25-hydroxylation of vitamin D3 that is required for its conversion to a functionally active form. This chain is Sterol 26-hydroxylase, mitochondrial (CYP27A1), found in Oryctolagus cuniculus (Rabbit).